Consider the following 682-residue polypeptide: DNA-directed RNA polymerase subunit beta' (682 aa).

Cysteine 69, cysteine 71, cysteine 87, and cysteine 90 together coordinate Zn(2+). Mg(2+)-binding residues include aspartate 491, aspartate 493, and aspartate 495.

This sequence belongs to the RNA polymerase beta' chain family. RpoC1 subfamily. In terms of assembly, in plastids the minimal PEP RNA polymerase catalytic core is composed of four subunits: alpha, beta, beta', and beta''. When a (nuclear-encoded) sigma factor is associated with the core the holoenzyme is formed, which can initiate transcription. It depends on Mg(2+) as a cofactor. Zn(2+) is required as a cofactor.

Its subcellular location is the plastid. The protein localises to the chloroplast. The catalysed reaction is RNA(n) + a ribonucleoside 5'-triphosphate = RNA(n+1) + diphosphate. In terms of biological role, DNA-dependent RNA polymerase catalyzes the transcription of DNA into RNA using the four ribonucleoside triphosphates as substrates. This is DNA-directed RNA polymerase subunit beta' from Lotus japonicus (Lotus corniculatus var. japonicus).